The chain runs to 350 residues: Protein FAM118B (350 aa).

The residue at position 2 (Ala-2) is an N-acetylalanine. Ser-9 carries the post-translational modification Phosphoserine.

The protein belongs to the FAM118 family.

Its subcellular location is the nucleus. It localises to the cajal body. In terms of biological role, may play a role in Cajal bodies formation. The chain is Protein FAM118B (FAM118B) from Macaca fascicularis (Crab-eating macaque).